A 220-amino-acid polypeptide reads, in one-letter code: 2-hydroxy-3-keto-5-methylthiopentenyl-1-phosphate phosphatase (220 aa).

It belongs to the HAD-like hydrolase superfamily. MtnX family.

The enzyme catalyses 2-hydroxy-5-methylsulfanyl-3-oxopent-1-enyl phosphate + H2O = 1,2-dihydroxy-5-(methylsulfanyl)pent-1-en-3-one + phosphate. Its pathway is amino-acid biosynthesis; L-methionine biosynthesis via salvage pathway; L-methionine from S-methyl-5-thio-alpha-D-ribose 1-phosphate: step 4/6. Its function is as follows. Dephosphorylates 2-hydroxy-3-keto-5-methylthiopentenyl-1-phosphate (HK-MTPenyl-1-P) yielding 1,2-dihydroxy-3-keto-5-methylthiopentene (DHK-MTPene). The sequence is that of 2-hydroxy-3-keto-5-methylthiopentenyl-1-phosphate phosphatase from Geobacillus thermodenitrificans (strain NG80-2).